We begin with the raw amino-acid sequence, 81 residues long: Sulfur carrier protein TusA (81 aa).

C19 functions as the Cysteine persulfide intermediate in the catalytic mechanism.

It belongs to the sulfur carrier protein TusA family. In terms of assembly, interacts with IscS.

The protein resides in the cytoplasm. The protein operates within tRNA modification. Functionally, sulfur carrier protein involved in sulfur trafficking in the cell. Part of a sulfur-relay system required for 2-thiolation during synthesis of 2-thiouridine of the modified wobble base 5-methylaminomethyl-2-thiouridine (mnm(5)s(2)U) in tRNA. Interacts with IscS and stimulates its cysteine desulfurase activity. Accepts an activated sulfur from IscS, which is then transferred to TusD, and thus determines the direction of sulfur flow from IscS to 2-thiouridine formation. Also appears to be involved in sulfur transfer for the biosynthesis of molybdopterin. The chain is Sulfur carrier protein TusA from Escherichia fergusonii (strain ATCC 35469 / DSM 13698 / CCUG 18766 / IAM 14443 / JCM 21226 / LMG 7866 / NBRC 102419 / NCTC 12128 / CDC 0568-73).